Reading from the N-terminus, the 493-residue chain is Vacuolar-processing enzyme (493 aa).

An N-terminal signal peptide occupies residues 1–34 (MAVHRSLLNKPTWCRVAFWWWMLVMVMRIQGTNG). The propeptide occupies 35-53 (KEQDSVIKLPTQEVDAESD). The active site involves His176. Catalysis depends on Cys218, which acts as the Nucleophile. Cys251 and Cys265 are disulfide-bonded. Asn318 is a glycosylation site (N-linked (GlcNAc...) asparagine). Disulfide bonds link Cys429–Cys459 and Cys441–Cys476.

It belongs to the peptidase C13 family.

Its function is as follows. Asparagine-specific endopeptidase involved in the processing of vacuolar seed protein precursors into the mature forms. The sequence is that of Vacuolar-processing enzyme from Phaseolus vulgaris (Kidney bean).